Consider the following 391-residue polypeptide: Phosphoglycerate kinase (391 aa).

Substrate contacts are provided by residues 21-23 (DLN), Arg36, 59-62 (HLGR), Arg113, and Arg146. Residues Lys197, Glu319, and 345–348 (GGDT) contribute to the ATP site.

The protein belongs to the phosphoglycerate kinase family. In terms of assembly, monomer.

The protein localises to the cytoplasm. It carries out the reaction (2R)-3-phosphoglycerate + ATP = (2R)-3-phospho-glyceroyl phosphate + ADP. It participates in carbohydrate degradation; glycolysis; pyruvate from D-glyceraldehyde 3-phosphate: step 2/5. The polypeptide is Phosphoglycerate kinase (Stenotrophomonas maltophilia (strain R551-3)).